Reading from the N-terminus, the 620-residue chain is tRNA uridine 5-carboxymethylaminomethyl modification enzyme MnmG (620 aa).

Residues 13–18 (GGGHAG), Val-125, and Ser-182 each bind FAD. 280 to 294 (GPRYCPSVEDKIVKF) provides a ligand contact to NAD(+). FAD is bound at residue Asn-377.

The protein belongs to the MnmG family. As to quaternary structure, homodimer. Heterotetramer of two MnmE and two MnmG subunits. It depends on FAD as a cofactor.

It is found in the cytoplasm. In terms of biological role, NAD-binding protein involved in the addition of a carboxymethylaminomethyl (cmnm) group at the wobble position (U34) of certain tRNAs, forming tRNA-cmnm(5)s(2)U34. This chain is tRNA uridine 5-carboxymethylaminomethyl modification enzyme MnmG, found in Sulfurihydrogenibium sp. (strain YO3AOP1).